The sequence spans 461 residues: UPF0210 protein LCABL_10110 (461 aa).

The protein belongs to the UPF0210 family. As to quaternary structure, homodimer.

The sequence is that of UPF0210 protein LCABL_10110 from Lacticaseibacillus casei (strain BL23) (Lactobacillus casei).